Reading from the N-terminus, the 517-residue chain is Phosphatase and actin regulator 3 (517 aa).

The disordered stretch occupies residues 1 to 24 (MDQTPPARSEPLVSGIRTPPVRRN). The residue at position 29 (Thr-29) is a Phosphothreonine. Disordered stretches follow at residues 41–247 (KKKN…RPLP) and 260–320 (ATKH…SEEN). An RPEL 1 repeat occupies 52-77 (SALEKKMAGRQGREELIKQGLLEMME). Basic and acidic residues predominate over residues 54–68 (LEKKMAGRQGREELI). 2 stretches are compositionally biased toward polar residues: residues 92 to 129 (QPAQSEPSAGEQETLTSEGVQPGSPSASGTDQASQDEL) and 157 to 172 (LPTTDEPSQEALSGSL). Over residues 187–198 (PSPPLLPTPPPK) the composition is skewed to pro residues. Ser-188 carries the post-translational modification Phosphoserine. Thr-194 is subject to Phosphothreonine. Over residues 260 to 300 (ATKHRQDSFQGRECRGSPKKRMDVRLSRTSSMERGKERDEA) the composition is skewed to basic and acidic residues. 3 RPEL repeats span residues 359–384 (ELLAVKLRNRPSKQELEDRNIFPRRT), 397–422 (MKLSKRLSQRPAVEELERRNILKQRN), and 435–460 (QRLTRKLNQRPTVDELRDRKILIRFS). Residues 408–444 (AVEELERRNILKQRNDQTEQEERREIKQRLTRKLNQR) are a coiled coil.

This sequence belongs to the phosphatase and actin regulator family. Binds actin and PPP1CA; thus inhibiting the protein phosphatase 1 (PP1) activity. In terms of tissue distribution, diffusely expressed throughout the brain cortex, with highest levels in the cortex and the hippocampus and lower levels in the striatum and thalamus.

Its subcellular location is the nucleus matrix. This chain is Phosphatase and actin regulator 3 (Phactr3), found in Rattus norvegicus (Rat).